We begin with the raw amino-acid sequence, 426 residues long: Phosphomethylpyrimidine synthase (426 aa).

Substrate-binding positions include Met94, Tyr123, His162, 184–186 (SRG), 225–228 (NGMR), and Glu264. Residue His268 coordinates Zn(2+). Tyr291 serves as a coordination point for substrate. His332 contacts Zn(2+). Positions 406, 409, and 413 each coordinate [4Fe-4S] cluster.

The protein belongs to the ThiC family. Requires [4Fe-4S] cluster as cofactor.

The enzyme catalyses 5-amino-1-(5-phospho-beta-D-ribosyl)imidazole + S-adenosyl-L-methionine = 4-amino-2-methyl-5-(phosphooxymethyl)pyrimidine + CO + 5'-deoxyadenosine + formate + L-methionine + 3 H(+). Its pathway is cofactor biosynthesis; thiamine diphosphate biosynthesis. Catalyzes the synthesis of the hydroxymethylpyrimidine phosphate (HMP-P) moiety of thiamine from aminoimidazole ribotide (AIR) in a radical S-adenosyl-L-methionine (SAM)-dependent reaction. The protein is Phosphomethylpyrimidine synthase of Methanospirillum hungatei JF-1 (strain ATCC 27890 / DSM 864 / NBRC 100397 / JF-1).